Reading from the N-terminus, the 106-residue chain is Nucleoid-associated protein Nwi_0368 (106 aa).

It belongs to the YbaB/EbfC family. Homodimer.

Its subcellular location is the cytoplasm. It is found in the nucleoid. In terms of biological role, binds to DNA and alters its conformation. May be involved in regulation of gene expression, nucleoid organization and DNA protection. This Nitrobacter winogradskyi (strain ATCC 25391 / DSM 10237 / CIP 104748 / NCIMB 11846 / Nb-255) protein is Nucleoid-associated protein Nwi_0368.